The primary structure comprises 469 residues: UDP-N-acetylmuramate--L-alanine ligase (469 aa).

Position 122–128 (Gly-122–Thr-128) interacts with ATP.

Belongs to the MurCDEF family.

The protein resides in the cytoplasm. The enzyme catalyses UDP-N-acetyl-alpha-D-muramate + L-alanine + ATP = UDP-N-acetyl-alpha-D-muramoyl-L-alanine + ADP + phosphate + H(+). It functions in the pathway cell wall biogenesis; peptidoglycan biosynthesis. Its function is as follows. Cell wall formation. The protein is UDP-N-acetylmuramate--L-alanine ligase of Legionella pneumophila subsp. pneumophila (strain Philadelphia 1 / ATCC 33152 / DSM 7513).